Consider the following 72-residue polypeptide: Translation initiation factor IF-1 (72 aa).

Residues 1–72 (MAKEEPIEVE…TRGRIIYRTK (72 aa)) enclose the S1-like domain.

It belongs to the IF-1 family. As to quaternary structure, component of the 30S ribosomal translation pre-initiation complex which assembles on the 30S ribosome in the order IF-2 and IF-3, IF-1 and N-formylmethionyl-tRNA(fMet); mRNA recruitment can occur at any time during PIC assembly.

Its subcellular location is the cytoplasm. One of the essential components for the initiation of protein synthesis. Stabilizes the binding of IF-2 and IF-3 on the 30S subunit to which N-formylmethionyl-tRNA(fMet) subsequently binds. Helps modulate mRNA selection, yielding the 30S pre-initiation complex (PIC). Upon addition of the 50S ribosomal subunit IF-1, IF-2 and IF-3 are released leaving the mature 70S translation initiation complex. This Syntrophus aciditrophicus (strain SB) protein is Translation initiation factor IF-1.